The following is a 556-amino-acid chain: 2-succinyl-5-enolpyruvyl-6-hydroxy-3-cyclohexene-1-carboxylate synthase (556 aa).

Belongs to the TPP enzyme family. MenD subfamily. Homodimer. It depends on Mg(2+) as a cofactor. Mn(2+) is required as a cofactor. The cofactor is thiamine diphosphate.

It catalyses the reaction isochorismate + 2-oxoglutarate + H(+) = 5-enolpyruvoyl-6-hydroxy-2-succinyl-cyclohex-3-ene-1-carboxylate + CO2. It participates in quinol/quinone metabolism; 1,4-dihydroxy-2-naphthoate biosynthesis; 1,4-dihydroxy-2-naphthoate from chorismate: step 2/7. The protein operates within quinol/quinone metabolism; menaquinone biosynthesis. Catalyzes the thiamine diphosphate-dependent decarboxylation of 2-oxoglutarate and the subsequent addition of the resulting succinic semialdehyde-thiamine pyrophosphate anion to isochorismate to yield 2-succinyl-5-enolpyruvyl-6-hydroxy-3-cyclohexene-1-carboxylate (SEPHCHC). This Salmonella gallinarum (strain 287/91 / NCTC 13346) protein is 2-succinyl-5-enolpyruvyl-6-hydroxy-3-cyclohexene-1-carboxylate synthase.